The chain runs to 83 residues: Putative membrane protein insertion efficiency factor (83 aa).

Belongs to the UPF0161 family.

It localises to the cell inner membrane. In terms of biological role, could be involved in insertion of integral membrane proteins into the membrane. The protein is Putative membrane protein insertion efficiency factor of Pelagibacter ubique (strain HTCC1062).